The chain runs to 644 residues: Acetyl-coenzyme A synthetase (644 aa).

CoA contacts are provided by residues 189–192 (RGGK) and threonine 307. ATP contacts are provided by residues 383–385 (GEP), 407–412 (DTWWQT), aspartate 496, and arginine 511. Serine 519 contributes to the CoA binding site. Arginine 522 lines the ATP pocket. Mg(2+) contacts are provided by valine 533, histidine 535, and valine 538. Residue arginine 580 coordinates CoA. Residue lysine 605 is modified to N6-acetyllysine.

Belongs to the ATP-dependent AMP-binding enzyme family. Mg(2+) is required as a cofactor. In terms of processing, acetylated. Deacetylation by the SIR2-homolog deacetylase activates the enzyme.

It carries out the reaction acetate + ATP + CoA = acetyl-CoA + AMP + diphosphate. Functionally, catalyzes the conversion of acetate into acetyl-CoA (AcCoA), an essential intermediate at the junction of anabolic and catabolic pathways. AcsA undergoes a two-step reaction. In the first half reaction, AcsA combines acetate with ATP to form acetyl-adenylate (AcAMP) intermediate. In the second half reaction, it can then transfer the acetyl group from AcAMP to the sulfhydryl group of CoA, forming the product AcCoA. This chain is Acetyl-coenzyme A synthetase, found in Rubrobacter xylanophilus (strain DSM 9941 / JCM 11954 / NBRC 16129 / PRD-1).